A 259-amino-acid chain; its full sequence is Protein snail homolog Sna (259 aa).

The tract at residues 1-20 is SNAG domain; sequence MPRSFLVKKHFSASKKPNYS. Residues 71–113 form a disordered region; the sequence is DYKKSPISPSSSDDSSKPLDLTSFSSEDEGGKTSDPPSPASSA. 5 consecutive C2H2-type zinc fingers follow at residues 119-141, 150-172, 176-198, 204-226, and 232-255; these read FQCN…KQLH, FSCK…IRSH, CVCK…IRTH, FSCT…LQTH, and YQCK…ETGC.

This sequence belongs to the snail C2H2-type zinc-finger protein family. Interacts (via SNAG domain) with limd1 (via LIM domains), wtip (via LIM domains) and ajuba (via LIM domains). Interacts with elp3; the interaction inhibits snai1 ubiquitination and promotes snai1 stability. In terms of processing, ubiquitinated. Maternal expression is nearly completely restricted to the vegetal hemisphere. Zygotic expression begins in the dorsal marginal zone just before gastrulation (stage 9), and is almost completely absent in the animal hemisphere. At mid-gastrula (stage 11-11.5), expression begins in the ectoderm in an arc surrounding the prospective neural plate. From stage 12, anterior expression is down-regulated, while levels are increased in the prospective neural crest.

The protein localises to the nucleus. Its function is as follows. Transcriptional repressor. Acts upstream of snai2/slug, zic5 and other neural crest markers in the specification of the neural crest and neural crest migration. Involved in embryonic mesoderm formation. The chain is Protein snail homolog Sna (snai1) from Xenopus laevis (African clawed frog).